Consider the following 930-residue polypeptide: Zn(2)-C6 fungal-type transcription factor FTF1c (930 aa).

Positions 137–164 (CIPCRRKKIRCSGEKPACEHCLRSYIPC) form a DNA-binding region, zn(2)-C6 fungal-type.

The protein resides in the nucleus. Functionally, zn(2)-C6 fungal-type transcription factor that has a role in the establishment of the fungus within the plant and/or the progress of the disease. Regulates the expression of virulence factors such as SIX1 and SIX6. The polypeptide is Zn(2)-C6 fungal-type transcription factor FTF1c (Fusarium oxysporum f. sp. lycopersici (strain 4287 / CBS 123668 / FGSC 9935 / NRRL 34936) (Fusarium vascular wilt of tomato)).